Here is a 1022-residue protein sequence, read N- to C-terminus: Mismatch repair endonuclease pms1 (1022 aa).

Disordered stretches follow at residues 251-282, 390-527, and 622-676; these read TGQS…SQSS, FNDE…EDED, and KMKQ…IDGY. Residues 403 to 412 show a composition bias toward polar residues; sequence KQSKISSFPN. 2 stretches are compositionally biased toward low complexity: residues 436 to 469 and 647 to 664; these read TTTT…NNRN and QKQQ…QQQQ.

Belongs to the DNA mismatch repair MutL/HexB family. Heterodimer of pms1 and mlh1 (MutL alpha). Forms a ternary complex with MutS alpha (msh2-msh6) or MutS beta (msh2-msh3).

The protein localises to the nucleus. Functionally, component of the post-replicative DNA mismatch repair system (MMR). Heterodimerizes with mlh1 to form MutL alpha. DNA repair is initiated by MutS alpha (msh2-msh6) or MutS beta (msh2-msh3) binding to a dsDNA mismatch, then MutL alpha is recruited to the heteroduplex. Assembly of the MutL-MutS-heteroduplex ternary complex in presence of rfc and pcna is sufficient to activate endonuclease activity of pms1. It introduces single-strand breaks near the mismatch and thus generates new entry points for the exonuclease exo1 to degrade the strand containing the mismatch. This Dictyostelium discoideum (Social amoeba) protein is Mismatch repair endonuclease pms1 (pms1).